Consider the following 172-residue polypeptide: Photosystem I assembly protein Ycf3 (172 aa).

TPR repeat units follow at residues 35 to 70 (AFTYYRDGAIMLAQSEGNYAEALQNYYEATRLEIDP), 74 to 107 (SYILYNIGLIHTSNGEHTKALEYYFRALERNPFL), and 122 to 155 (GEQAILQGDSEIAEAWFDQAAEYWKQAIALTPGN).

This sequence belongs to the Ycf3 family.

It localises to the plastid. Its subcellular location is the chloroplast thylakoid membrane. Functionally, essential for the assembly of the photosystem I (PSI) complex. May act as a chaperone-like factor to guide the assembly of the PSI subunits. The polypeptide is Photosystem I assembly protein Ycf3 (Sorghum bicolor (Sorghum)).